The chain runs to 794 residues: Transcription factor TOG1 (794 aa).

Cys-18, Cys-21, Cys-28, Cys-34, Cys-37, and Cys-44 together coordinate Zn(2+). The segment at residues 18 to 44 (CDRCHRKKIKCNSKKPCFGCIGSQSKC) is a DNA-binding region (zn(2)-C6 fungal-type).

Its subcellular location is the nucleus. Transcriptional activator required for growth on non-fermentable carbon sources and that regulates genes involved in fatty acid utilization. Acts as a direct activator that binds the promoters of oleate utilizing genes, encoded key enzymes in beta-oxidation and NADPH regeneration (POX1, FOX2,POT1 and IDP2), the glyoxylate shunt (MLS1 and ICL1), and gluconeogenesis (PCK1 and FBP1). Also regulates the abundance of peroxisomes that are vital for fatty acid oxidation. The chain is Transcription factor TOG1 from Saccharomyces cerevisiae (strain ATCC 204508 / S288c) (Baker's yeast).